The following is a 346-amino-acid chain: Holliday junction branch migration complex subunit RuvB (346 aa).

A large ATPase domain (RuvB-L) region spans residues 1–183 (MTEQRIIASS…FGIVQRLEFY (183 aa)). Residues Ile-22, Arg-23, Gly-64, Lys-67, Thr-68, Thr-69, 130–132 (EDF), Arg-173, Tyr-183, and Arg-220 contribute to the ATP site. Thr-68 lines the Mg(2+) pocket. The interval 184–254 (SPQELTRIVI…VAQAAMQMLK (71 aa)) is small ATPAse domain (RuvB-S). The interval 257–346 (PEGFDELDRR…PGIGEPGDLF (90 aa)) is head domain (RuvB-H). DNA-binding residues include Arg-293, Arg-312, and Arg-317.

This sequence belongs to the RuvB family. Homohexamer. Forms an RuvA(8)-RuvB(12)-Holliday junction (HJ) complex. HJ DNA is sandwiched between 2 RuvA tetramers; dsDNA enters through RuvA and exits via RuvB. An RuvB hexamer assembles on each DNA strand where it exits the tetramer. Each RuvB hexamer is contacted by two RuvA subunits (via domain III) on 2 adjacent RuvB subunits; this complex drives branch migration. In the full resolvosome a probable DNA-RuvA(4)-RuvB(12)-RuvC(2) complex forms which resolves the HJ.

It localises to the cytoplasm. It carries out the reaction ATP + H2O = ADP + phosphate + H(+). Functionally, the RuvA-RuvB-RuvC complex processes Holliday junction (HJ) DNA during genetic recombination and DNA repair, while the RuvA-RuvB complex plays an important role in the rescue of blocked DNA replication forks via replication fork reversal (RFR). RuvA specifically binds to HJ cruciform DNA, conferring on it an open structure. The RuvB hexamer acts as an ATP-dependent pump, pulling dsDNA into and through the RuvAB complex. RuvB forms 2 homohexamers on either side of HJ DNA bound by 1 or 2 RuvA tetramers; 4 subunits per hexamer contact DNA at a time. Coordinated motions by a converter formed by DNA-disengaged RuvB subunits stimulates ATP hydrolysis and nucleotide exchange. Immobilization of the converter enables RuvB to convert the ATP-contained energy into a lever motion, pulling 2 nucleotides of DNA out of the RuvA tetramer per ATP hydrolyzed, thus driving DNA branch migration. The RuvB motors rotate together with the DNA substrate, which together with the progressing nucleotide cycle form the mechanistic basis for DNA recombination by continuous HJ branch migration. Branch migration allows RuvC to scan DNA until it finds its consensus sequence, where it cleaves and resolves cruciform DNA. In Xanthomonas axonopodis pv. citri (strain 306), this protein is Holliday junction branch migration complex subunit RuvB.